The sequence spans 57 residues: Catalase-1 (57 aa).

Y37 contributes to the heme binding site.

Homodimer. It depends on heme as a cofactor.

It carries out the reaction 2 H2O2 = O2 + 2 H2O. In terms of biological role, decomposes hydrogen peroxide into water and oxygen; serves to protect cells from the toxic effects of hydrogen peroxide. In Comamonas terrigena, this protein is Catalase-1.